The following is a 444-amino-acid chain: DNA repair protein RadA (444 aa).

Residues 10 to 27 (CQECGYKSVKWLGKCPSC) form a C4-type zinc finger. 91 to 98 (GEPGIGKS) contributes to the ATP binding site. The RadA KNRFG motif motif lies at 247-251 (KNRFG). A lon-protease-like region spans residues 345 to 444 (DVFVNVAGGM…HIQEAIEVLF (100 aa)).

This sequence belongs to the RecA family. RadA subfamily.

Its function is as follows. DNA-dependent ATPase involved in processing of recombination intermediates, plays a role in repairing DNA breaks. Stimulates the branch migration of RecA-mediated strand transfer reactions, allowing the 3' invading strand to extend heteroduplex DNA faster. Binds ssDNA in the presence of ADP but not other nucleotides, has ATPase activity that is stimulated by ssDNA and various branched DNA structures, but inhibited by SSB. Does not have RecA's homology-searching function. This is DNA repair protein RadA from Aquifex aeolicus (strain VF5).